The following is a 227-amino-acid chain: Ribonuclease 3 (227 aa).

In terms of domain architecture, RNase III spans 4-133; that stretch reads FEELEKLLDY…LIAAIYLDSD (130 aa). Position 46 (Glu-46) interacts with Mg(2+). The active site involves Asp-50. Residues Asn-119 and Glu-122 each coordinate Mg(2+). Residue Glu-122 is part of the active site. Positions 158–226 constitute a DRBM domain; the sequence is DPKTALQEWA…ARELLHKLKL (69 aa).

The protein belongs to the ribonuclease III family. As to quaternary structure, homodimer. The cofactor is Mg(2+).

Its subcellular location is the cytoplasm. The catalysed reaction is Endonucleolytic cleavage to 5'-phosphomonoester.. Its function is as follows. Digests double-stranded RNA. Involved in the processing of primary rRNA transcript to yield the immediate precursors to the large and small rRNAs (23S and 16S). Processes some mRNAs, and tRNAs when they are encoded in the rRNA operon. Processes pre-crRNA and tracrRNA of type II CRISPR loci if present in the organism. This chain is Ribonuclease 3, found in Rickettsia bellii (strain OSU 85-389).